The following is a 272-amino-acid chain: HTH-type transcriptional repressor AllR (272 aa).

Positions 1-20 (MTEVRRRGRPGQAEPTAQKG) are disordered. One can recognise an HTH iclR-type domain in the interval 21–83 (AQALERGIAI…SQLGWWHIGL (63 aa)). The H-T-H motif DNA-binding region spans 43–62 (VSDISGSLDLPLSTTFRLLK). Residues 98–267 (VLSVAGPFMH…AKDISTALGL (170 aa)) form the IclR-ED domain. Glyoxylate is bound by residues 154–156 (SGA), Asp-207, Cys-217, and 234–236 (SIS).

Functionally, negative regulator of allantoin and glyoxylate utilization operons. Binds to the gcl promoter and to the allS-allA intergenic region. This chain is HTH-type transcriptional repressor AllR (allR), found in Salmonella paratyphi A (strain ATCC 9150 / SARB42).